The following is an 85-amino-acid chain: RNA-binding protein Hfq (85 aa).

Positions Asp-9 to Ile-69 constitute a Sm domain.

It belongs to the Hfq family. Homohexamer.

In terms of biological role, RNA chaperone that binds small regulatory RNA (sRNAs) and mRNAs to facilitate mRNA translational regulation in response to envelope stress, environmental stress and changes in metabolite concentrations. Also binds with high specificity to tRNAs. The polypeptide is RNA-binding protein Hfq (Leptospira interrogans serogroup Icterohaemorrhagiae serovar copenhageni (strain Fiocruz L1-130)).